The following is a 348-amino-acid chain: Phosphoribosylformylglycinamidine cyclo-ligase (348 aa).

It belongs to the AIR synthase family.

The protein resides in the cytoplasm. It catalyses the reaction 2-formamido-N(1)-(5-O-phospho-beta-D-ribosyl)acetamidine + ATP = 5-amino-1-(5-phospho-beta-D-ribosyl)imidazole + ADP + phosphate + H(+). Its pathway is purine metabolism; IMP biosynthesis via de novo pathway; 5-amino-1-(5-phospho-D-ribosyl)imidazole from N(2)-formyl-N(1)-(5-phospho-D-ribosyl)glycinamide: step 2/2. The chain is Phosphoribosylformylglycinamidine cyclo-ligase from Geobacter sp. (strain M21).